A 523-amino-acid polypeptide reads, in one-letter code: Peptide chain release factor 3 (523 aa).

One can recognise a tr-type G domain in the interval 10 to 277; it reads KKRRTFAIIS…SFVDLAPAPE (268 aa). GTP contacts are provided by residues 19–26, 87–91, and 141–144; these read SHPDAGKT, DTPGH, and NKLD.

This sequence belongs to the TRAFAC class translation factor GTPase superfamily. Classic translation factor GTPase family. PrfC subfamily.

It is found in the cytoplasm. Increases the formation of ribosomal termination complexes and stimulates activities of RF-1 and RF-2. It binds guanine nucleotides and has strong preference for UGA stop codons. It may interact directly with the ribosome. The stimulation of RF-1 and RF-2 is significantly reduced by GTP and GDP, but not by GMP. This Lactobacillus helveticus (strain DPC 4571) protein is Peptide chain release factor 3.